A 486-amino-acid chain; its full sequence is RAC-beta serine/threonine-protein kinase A (486 aa).

The 106-residue stretch at 5-110 (MVIKEGWLQK…WIIAIQTVAN (106 aa)) folds into the PH domain. O-linked (GlcNAc) serine glycosylation is found at Ser-133 and Ser-136. One can recognise a Protein kinase domain in the interval 157 to 414 (FDYLKLLGKG…AQEVMSHRFF (258 aa)). ATP contacts are provided by residues 163 to 171 (LGKGTFGKV) and Lys-186. Asp-280 functions as the Proton acceptor in the catalytic mechanism. O-linked (GlcNAc) threonine glycosylation occurs at Thr-311. Thr-314 carries the post-translational modification Phosphothreonine. Thr-318 carries an O-linked (GlcNAc) threonine glycan. The region spanning 415–486 (VSINWQDVTE…QFSYSASIRE (72 aa)) is the AGC-kinase C-terminal domain. Residues 455–486 (LTPPDRYDNLDALESDQRPHFPQFSYSASIRE) are disordered. The span at 459–473 (DRYDNLDALESDQRP) shows a compositional bias: basic and acidic residues. Residue Ser-479 is modified to Phosphoserine. A glycan (O-linked (GlcNAc) serine; alternate) is linked at Ser-479.

The protein belongs to the protein kinase superfamily. AGC Ser/Thr protein kinase family. RAC subfamily. Post-translationally, phosphorylation on Thr-314 and Ser-479 is required for full activity. Phosphorylation of the activation loop at Thr-314 by PDPK1/PDK1 is a prerequisite for full activation. Phosphorylation by mTORC2 at Ser-479 in response to growth factors plays a key role in AKT1 activation by facilitating subsequent phosphorylation of the activation loop by PDPK1/PDK1.

It carries out the reaction L-seryl-[protein] + ATP = O-phospho-L-seryl-[protein] + ADP + H(+). The enzyme catalyses L-threonyl-[protein] + ATP = O-phospho-L-threonyl-[protein] + ADP + H(+). With respect to regulation, two specific sites, one in the kinase domain (Thr-314) and the other in the C-terminal regulatory region (Ser-479), need to be phosphorylated for its full activation. Akt2-a is one of several closely related serine/threonine-protein kinases known as the AKT kinase, and which regulate many processes including metabolism, proliferation, cell survival, growth and angiogenesis. This is mediated through serine and/or threonine phosphorylation of a range of downstream substrates. Over 100 substrate candidates have been reported so far, but for most of them, no isoform specificity has been reported. May be involved in the inhibition of ciliogenesis. The chain is RAC-beta serine/threonine-protein kinase A (akt2-a) from Xenopus laevis (African clawed frog).